The following is a 55-amino-acid chain: Large ribosomal subunit protein bL33 (55 aa).

It belongs to the bacterial ribosomal protein bL33 family.

The protein is Large ribosomal subunit protein bL33 of Methylobacterium sp. (strain 4-46).